Reading from the N-terminus, the 212-residue chain is Peptide methionine sulfoxide reductase MsrA (212 aa).

Cys52 is a catalytic residue.

The protein belongs to the MsrA Met sulfoxide reductase family.

It catalyses the reaction L-methionyl-[protein] + [thioredoxin]-disulfide + H2O = L-methionyl-(S)-S-oxide-[protein] + [thioredoxin]-dithiol. The catalysed reaction is [thioredoxin]-disulfide + L-methionine + H2O = L-methionine (S)-S-oxide + [thioredoxin]-dithiol. Its function is as follows. Has an important function as a repair enzyme for proteins that have been inactivated by oxidation. Catalyzes the reversible oxidation-reduction of methionine sulfoxide in proteins to methionine. In Salmonella arizonae (strain ATCC BAA-731 / CDC346-86 / RSK2980), this protein is Peptide methionine sulfoxide reductase MsrA.